Consider the following 151-residue polypeptide: Probable cGMP 3',5'-cyclic phosphodiesterase subunit delta (151 aa).

This sequence belongs to the PDE6D/unc-119 family. Interacts with Pde6.

The protein localises to the nucleus. It is found in the cytoplasm. The sequence is that of Probable cGMP 3',5'-cyclic phosphodiesterase subunit delta from Culex quinquefasciatus (Southern house mosquito).